The primary structure comprises 122 residues: HetP-like commitment protein Alr3234 (122 aa).

The protein belongs to the HetP family. In terms of assembly, in bacterial two-hybrid assays interacts robustly with itself, Asl1930, Alr2902 and HetR and weakly with HetP.

Its function is as follows. Delays heterocyst differentiation and commitment when nitrogen is limiting. Interplay between the 4 HetP paralogs controls the timing of commitment to heterocyst formation and its duration. Epistatic analysis show that the 3 paralogs act upstream of hetP to delay commitment (asl1930, alr3234) or inhibit development (alr2902). Asl1930 and Alr3234 must also attenuate the activity of Alr2902. Ectopic expression does not complement a hetP deletion. In Nostoc sp. (strain PCC 7120 / SAG 25.82 / UTEX 2576), this protein is HetP-like commitment protein Alr3234.